The primary structure comprises 865 residues: MQTTHPKNLHLTCSGVERGFTNSPKTHPKMSSLKSFIKAVRASKTTAEEHTTILKESAQIRKNIRQGSNDMRMRRKNVAKLLYLFLLGEPTHFGQIECLKLLSSSRFMDKRLGYLAAMLLLDENQEVLTLLTNSLQNDLKSRDKFIVGLALSAFGNVAGPELARDLSNDIAELCSNHHNYISKKAVLCALRVIQKEPDLESLYIEKTDELLHSKSHGVLMAALAFAISACKINPSLISRFESQADDLIYRIRQLSTSTYSSEHNIGNISDPFLQVKILQFLSILGQNNPKIYDKMSDLLAQVCTNTDSSRNAGNAILYQAVRTILDLNSDSSLRVLGVNILAKFLGNRDNNTRYVALNMLKLVVNSEENAVQRHRSTILACLNDVDSSIQSRALELSTFLVNEANVRFMVRELLSFLDNVSDELRGSTAQYITEVTNAFAPNKRWHFDTLLRVFKSAGNFVSESTLSTFLRLIASAPELHEYAVVKLYAALKEDVSQEALTLSAFWVIGEYGQMLLSPTMNFDDDQTLPHSVSESDIVDIIEEVFNSVEASRYIIVQYGLFALTKLSARLGSSSTASRIDKIIYSYKRNKNTEVQQRSVEFHLILNDSKLSKTILEPTPAPLPPPRTTPYQNAEQKLKANKHVEKRVQESNELLDLIGLTTPSVAEPLETPVDEMTQSPQSSLSRAPSTSKKSHFEDILGLFASPAPSAQPVDSLASSFASLDFNASASQPSNNLSLLSSIPSTSKSYPPIVVFDKHDVTLTLVPSKEESTKTAVIEAKFKNKNPMTRVEKIHLEVAVPKSQKLKIQPLRTTSMEPGGETSQTLRVHGPSGSQVKLRLRISVVRQGGSNTLDQVDFGKLPSDLLQ.

The interval 665-690 is disordered; sequence AEPLETPVDEMTQSPQSSLSRAPSTS. The segment covering 675–690 has biased composition (polar residues); that stretch reads MTQSPQSSLSRAPSTS. Residues 746–860 enclose the GAE domain; sequence KSYPPIVVFD…LDQVDFGKLP (115 aa).

This sequence belongs to the adaptor complexes large subunit family. Adaptor protein complex 1 (AP-1) is a heterotetramer composed of two large adaptins (gamma-type subunit apl4 and beta-type subunit apl2), a medium adaptin (mu-type subunit apm1) and a small adaptin (sigma-type subunit aps1). AP-1 interacts with clathrin.

It is found in the cytoplasmic vesicle. The protein localises to the clathrin-coated vesicle membrane. The protein resides in the golgi apparatus. Adaptins are components of the adaptor complexes which link clathrin to receptors in coated vesicles. Clathrin-associated protein complexes are believed to interact with the cytoplasmic tails of membrane proteins, leading to their selection and concentration. The AP-1 complex interacts directly with clathrin. The protein is AP-1 complex subunit gamma-1 (apl4) of Schizosaccharomyces pombe (strain 972 / ATCC 24843) (Fission yeast).